Here is a 1106-residue protein sequence, read N- to C-terminus: Probable LRR receptor-like serine/threonine-protein kinase At1g74360 (1106 aa).

Positions 1–34 are cleaved as a signal peptide; it reads MTMVTRVIMTDDDSQSLCFLCFLLFFFITAIAVA. Residues 35–736 lie on the Extracellular side of the membrane; it reads GDSLDSDREV…PRTLLLIWIS (702 aa). 7 LRR repeats span residues 86–109, 110–134, 136–156, 157–182, 184–204, 205–226, and 227–250; these read RSRV…NFSA, LTEL…LSRC, NLKH…LPGL, SNLE…LFCN, LVVA…IFNG, CRNL…WTGF, and GRLV…MFRG. Residues Asn-93 and Asn-106 are each glycosylated (N-linked (GlcNAc...) asparagine). N-linked (GlcNAc...) asparagine glycosylation occurs at Asn-141. Asn-188 and Asn-193 each carry an N-linked (GlcNAc...) asparagine glycan. Residues Asn-242 and Asn-251 are each glycosylated (N-linked (GlcNAc...) asparagine). LRR repeat units follow at residues 252-275, 276-299, 300-323, 325-346, 348-371, 372-396, 398-419, 420-443, 445-468, 470-492, 566-593, 594-617, 619-640, 641-664, and 666-690; these read CTLQ…VSNC, QNLN…IGSI, SSLK…LLNL, NLVF…IFGR, TQVK…NILK, LPNL…ISQI, SLKF…EYGN, MPGL…SFGK, TSLL…IGNC, SLLW…LTRM, VRTL…ISQM, DRLS…IGQL, LAFL…IGNL, KCLQ…LNDL, and ELSK…QVAT. Asn-309 and Asn-322 each carry an N-linked (GlcNAc...) asparagine glycan. N-linked (GlcNAc...) asparagine glycans are attached at residues Asn-365, Asn-374, Asn-384, and Asn-408. N-linked (GlcNAc...) asparagine glycans are attached at residues Asn-454 and Asn-467. Residues Asn-623, Asn-628, Asn-652, Asn-671, Asn-709, and Asn-713 are each glycosylated (N-linked (GlcNAc...) asparagine). Residues 737 to 757 form a helical membrane-spanning segment; sequence LALALAFIACLVVSGIVLMVV. Residues 758–1106 are Cytoplasmic-facing; that stretch reads KASREAEIDL…GLSSQGYIEM (349 aa). Residues Thr-803 and Thr-811 each carry the phosphothreonine modification. One can recognise a Protein kinase domain in the interval 814–1095; the sequence is FSEERVVGRG…VKISGKAELF (282 aa). ATP is bound by residues 820–828 and Lys-842; that span reads VGRGGYGTV. The Proton acceptor role is filled by Asp-941. Tyr-983 carries the phosphotyrosine modification. Thr-991 bears the Phosphothreonine mark.

It belongs to the protein kinase superfamily. Ser/Thr protein kinase family.

It localises to the mitochondrion membrane. The catalysed reaction is L-seryl-[protein] + ATP = O-phospho-L-seryl-[protein] + ADP + H(+). It catalyses the reaction L-threonyl-[protein] + ATP = O-phospho-L-threonyl-[protein] + ADP + H(+). The chain is Probable LRR receptor-like serine/threonine-protein kinase At1g74360 from Arabidopsis thaliana (Mouse-ear cress).